We begin with the raw amino-acid sequence, 181 residues long: Cytolethal distending toxin subunit C (181 aa).

An N-terminal signal peptide occupies residues 1 to 15 (MKKLAIVFTMLLIAG). Cys-16 carries the N-palmitoyl cysteine lipid modification. Residue Cys-16 is the site of S-diacylglycerol cysteine attachment. The 103-residue stretch at 79-181 (QSGWIMIRTP…NPLNTESPII (103 aa)) folds into the Ricin B-type lectin domain.

In terms of assembly, heterotrimer of 3 subunits, CdtA, CdtB and CdtC.

The protein localises to the cell outer membrane. In terms of biological role, part of the tripartite complex that is required for the CDT activity. CdtC, along with CdtA, probably forms a heterodimeric subunit required for the delivery of CdtB. In Escherichia coli, this protein is Cytolethal distending toxin subunit C (cdtC).